The primary structure comprises 93 residues: uncharacterized protein (93 aa).

This sequence to B.subtilis YdcN C-terminal region.

This is an uncharacterized protein from Methanocaldococcus jannaschii (strain ATCC 43067 / DSM 2661 / JAL-1 / JCM 10045 / NBRC 100440) (Methanococcus jannaschii).